Here is a 106-residue protein sequence, read N- to C-terminus: Large ribosomal subunit protein uL24 (106 aa).

It belongs to the universal ribosomal protein uL24 family. As to quaternary structure, part of the 50S ribosomal subunit.

One of two assembly initiator proteins, it binds directly to the 5'-end of the 23S rRNA, where it nucleates assembly of the 50S subunit. In terms of biological role, one of the proteins that surrounds the polypeptide exit tunnel on the outside of the subunit. This Clostridium tetani (strain Massachusetts / E88) protein is Large ribosomal subunit protein uL24.